A 773-amino-acid polypeptide reads, in one-letter code: Preaspterpenacid I synthase sttA (773 aa).

The segment at 4–359 (ISDVMKHCVP…RYHRTDLATT (356 aa)) is sesterterpenoid synthase. Aspartate 105 provides a ligand contact to Mg(2+). Substrate is bound at residue aspartate 105. Residues 211–214 (RVNE) are substrate. Residue asparagine 255 coordinates substrate. 2 substrate regions span residues 259 to 263 (SFPKE) and 350 to 351 (RY). The segment at 360-769 (AEDRATLIGK…RMMLLGMGPK (410 aa)) is geranylfarnesyl diphosphate synthase. Residues 423 to 447 (AFKKRNSRNGKQNGTEGSKSTFTNG) form a disordered region. The span at 431–447 (NGKQNGTEGSKSTFTNG) shows a compositional bias: polar residues. Residues lysine 493, arginine 496, and histidine 525 each contribute to the isopentenyl diphosphate site. Residues aspartate 532 and aspartate 536 each coordinate Mg(2+). Arginine 541 lines the dimethylallyl diphosphate pocket. Arginine 542 is a binding site for isopentenyl diphosphate. The dimethylallyl diphosphate site is built by lysine 614, threonine 615, glutamine 652, asparagine 659, and lysine 669.

The protein in the N-terminal section; belongs to the terpene synthase family. It in the C-terminal section; belongs to the FPP/GGPP synthase family.

It catalyses the reaction 4 isopentenyl diphosphate + dimethylallyl diphosphate = (2E,6E,10E,14E)-geranylfarnesyl diphosphate + 4 diphosphate. The catalysed reaction is (2E,6E,10E,14E)-geranylfarnesyl diphosphate + H2O = preaspterpenacid acid I + diphosphate. The protein operates within secondary metabolite biosynthesis; terpenoid biosynthesis. Its function is as follows. Sesterterpenoid synthase; part of the gene cluster that mediates the biosynthesis of aspterpenacids. Performs both prenyl transferase and terpene cyclase activity, converting isopentenyl diphosphate and dimethylallyl diphosphate into geranylfarnesyl diphosphate (GFPP) and then converting GFPP into preaspterpenacid I. C22-oxidative modification of preaspterpenacid I by the cytochrome P450 monooxygenase sttB then leads to preaspterpenacid II. It has still to be determined how preaspterpenacid II is further modified to produce aspterpenacids. This Aspergillus terreus (strain NIH 2624 / FGSC A1156) protein is Preaspterpenacid I synthase sttA.